The following is a 162-amino-acid chain: ATP synthase subunit b (162 aa).

Residues 4-24 (INWGSIIYQLIAFCVLLWLLS) traverse the membrane as a helical segment.

It belongs to the ATPase B chain family. As to quaternary structure, F-type ATPases have 2 components, F(1) - the catalytic core - and F(0) - the membrane proton channel. F(1) has five subunits: alpha(3), beta(3), gamma(1), delta(1), epsilon(1). F(0) has three main subunits: a(1), b(2) and c(10-14). The alpha and beta chains form an alternating ring which encloses part of the gamma chain. F(1) is attached to F(0) by a central stalk formed by the gamma and epsilon chains, while a peripheral stalk is formed by the delta and b chains.

The protein localises to the cell membrane. Its function is as follows. F(1)F(0) ATP synthase produces ATP from ADP in the presence of a proton or sodium gradient. F-type ATPases consist of two structural domains, F(1) containing the extramembraneous catalytic core and F(0) containing the membrane proton channel, linked together by a central stalk and a peripheral stalk. During catalysis, ATP synthesis in the catalytic domain of F(1) is coupled via a rotary mechanism of the central stalk subunits to proton translocation. In terms of biological role, component of the F(0) channel, it forms part of the peripheral stalk, linking F(1) to F(0). The protein is ATP synthase subunit b of Halalkalibacterium halodurans (strain ATCC BAA-125 / DSM 18197 / FERM 7344 / JCM 9153 / C-125) (Bacillus halodurans).